Here is a 712-residue protein sequence, read N- to C-terminus: Amino-acid acetyltransferase, mitochondrial (712 aa).

A mitochondrion-targeting transit peptide spans 1 to 47; that stretch reads MFVRTCRSSCNAWTNATSTTQAGSLLPPNAHRSVVLTLSLQACSART. Residues 55-99 form a disordered region; that stretch reads FASTTSQSKRQEAEAEEKRQVSPRLGPSAPRSSYPSSAEARQKRD. The span at 63–74 shows a compositional bias: basic and acidic residues; that stretch reads KRQEAEAEEKRQ. Residues 81 to 93 are compositionally biased toward low complexity; it reads PSAPRSSYPSSAE. Positions 534–702 constitute an N-acetyltransferase domain; that stretch reads GVPRLRLTDT…YEDVCRNIAP (169 aa).

Belongs to the acetyltransferase family.

The protein resides in the mitochondrion. The catalysed reaction is L-glutamate + acetyl-CoA = N-acetyl-L-glutamate + CoA + H(+). It functions in the pathway amino-acid biosynthesis; L-arginine biosynthesis; N(2)-acetyl-L-ornithine from L-glutamate: step 1/4. Its activity is regulated as follows. Inhibited by arginine. Functionally, N-acetylglutamate synthase involved in arginine biosynthesis. This is Amino-acid acetyltransferase, mitochondrial (arg-14) from Neurospora crassa (strain ATCC 24698 / 74-OR23-1A / CBS 708.71 / DSM 1257 / FGSC 987).